A 545-amino-acid polypeptide reads, in one-letter code: Glucose-6-phosphate isomerase (545 aa).

E351 (proton donor) is an active-site residue. Catalysis depends on residues H382 and K510.

The protein belongs to the GPI family.

It localises to the cytoplasm. The catalysed reaction is alpha-D-glucose 6-phosphate = beta-D-fructose 6-phosphate. Its pathway is carbohydrate biosynthesis; gluconeogenesis. It functions in the pathway carbohydrate degradation; glycolysis; D-glyceraldehyde 3-phosphate and glycerone phosphate from D-glucose: step 2/4. Its function is as follows. Catalyzes the reversible isomerization of glucose-6-phosphate to fructose-6-phosphate. This chain is Glucose-6-phosphate isomerase, found in Shewanella frigidimarina (strain NCIMB 400).